Here is a 531-residue protein sequence, read N- to C-terminus: High-affinity glucose transporter ght2 (531 aa).

Residues 5–13 (RGKNFTLVM) are Cytoplasmic-facing. A helical membrane pass occupies residues 14 to 34 (LIFVSMAGWMFGADTGSIGGV). The Extracellular segment spans residues 35-62 (TSMRDFRERYADRYDPITDQYSLSSARQ). A helical membrane pass occupies residues 63–83 (GLLTGMVNVGSLFGCIISSPI). Residues 84-91 (ADRFGKRL) are Cytoplasmic-facing. A helical transmembrane segment spans residues 92–112 (SIIGFCAVYIIGIIVQVTAVP). Over 113–116 (SWVQ) the chain is Extracellular. The helical transmembrane segment at 117–137 (IMVAKIWTGIGIGALSVLAPG) threads the bilayer. Over 138–148 (YQSETAPPSIR) the chain is Cytoplasmic. Residues 149 to 169 (GTVVVTYQLFVTGGIFIAACI) form a helical membrane-spanning segment. The Extracellular segment spans residues 170–183 (NMGTHKLHKTAQWR). A helical transmembrane segment spans residues 184 to 204 (VSIGINLLWGIITMIGILFLP). Topologically, residues 205–270 (ESPRYLIQVG…IFGKDIRYRT (66 aa)) are cytoplasmic. Residues 271-289 (FLGMFVMSLQQLTGNNYFF) traverse the membrane as a helical segment. At 290–305 (YYGFSVMQGAGINSPY) the chain is on the extracellular side. Residues 306-326 (LSAMILDAVNFGCTFGGMYVL) form a helical membrane-spanning segment. Residues 327 to 332 (ERFGRR) are Cytoplasmic-facing. A helical transmembrane segment spans residues 333 to 353 (NPLIIGGIWQSICFFIYSAVG). At 354-367 (SRALYHKNGTSNTR) the chain is on the extracellular side. A glycan (N-linked (GlcNAc...) asparagine) is linked at Asn361. The helical transmembrane segment at 368–388 (AGAVMIVMACLFIFGFAQTWA) threads the bilayer. The Cytoplasmic segment spans residues 389 to 408 (PAAYVIVGESYPVRYRSKCA). Residues 409–429 (AVATASNWLWNFLISFFTPFI) traverse the membrane as a helical segment. Residues 430-436 (QASIGFK) are Extracellular-facing. A helical transmembrane segment spans residues 437–457 (YGYVFASCNLTGAIVIFLFAK). Residues 458-531 (ETKGLTLEEI…QYSSHEEDYA (74 aa)) are Cytoplasmic-facing. The segment at 491–531 (KKVEKEKSRKGGARGESVEYVERASNTDSSPQYSSHEEDYA) is disordered. Ser507, Ser515, Ser519, and Ser520 each carry phosphoserine. Residues 514–524 (ASNTDSSPQYS) are compositionally biased toward polar residues. Tyr523 carries the post-translational modification Phosphotyrosine.

This sequence belongs to the major facilitator superfamily. Sugar transporter (TC 2.A.1.1) family.

The protein resides in the membrane. High-affinity glucose transporter. In Schizosaccharomyces pombe (strain 972 / ATCC 24843) (Fission yeast), this protein is High-affinity glucose transporter ght2 (ght2).